A 465-amino-acid polypeptide reads, in one-letter code: Dihydrolipoyl dehydrogenase (465 aa).

FAD is bound by residues 34-42 (EKREAGGTC), Lys-51, and Gly-114. The cysteines at positions 42 and 47 are disulfide-linked. NAD(+) is bound by residues 180 to 184 (GGGVI), Glu-203, Val-237, and 264 to 267 (SIGR). The FAD site is built by Asp-307 and Ala-315. His-439 serves as the catalytic Proton acceptor.

Belongs to the class-I pyridine nucleotide-disulfide oxidoreductase family. The cofactor is FAD.

It is found in the cytoplasm. It catalyses the reaction N(6)-[(R)-dihydrolipoyl]-L-lysyl-[protein] + NAD(+) = N(6)-[(R)-lipoyl]-L-lysyl-[protein] + NADH + H(+). The branched-chain alpha-keto dehydrogenase complex catalyzes the overall conversion of alpha-keto acids to acyl-CoA and CO(2). It contains multiple copies of 3 enzymatic components: branched-chain alpha-keto acid decarboxylase (E1), lipoamide acyltransferase (E2) and lipoamide dehydrogenase (E3). The protein is Dihydrolipoyl dehydrogenase (lpdA) of Chlamydia trachomatis serovar D (strain ATCC VR-885 / DSM 19411 / UW-3/Cx).